A 215-amino-acid chain; its full sequence is Guanylate kinase (215 aa).

Positions 6 to 185 (GAILVLSGPS…SEKLLLSIAR (180 aa)) constitute a Guanylate kinase-like domain. 13–20 (GPSGSGKS) lines the ATP pocket.

It belongs to the guanylate kinase family.

It is found in the cytoplasm. It carries out the reaction GMP + ATP = GDP + ADP. Functionally, essential for recycling GMP and indirectly, cGMP. The sequence is that of Guanylate kinase from Wolinella succinogenes (strain ATCC 29543 / DSM 1740 / CCUG 13145 / JCM 31913 / LMG 7466 / NCTC 11488 / FDC 602W) (Vibrio succinogenes).